The primary structure comprises 647 residues: Sialidase (647 aa).

The first 37 residues, 1 to 37 (MTANPYLRRLPRRRAVSFLLAPALAAATVAGASPAQA), serve as a signal peptide directing secretion. Arg68 is a binding site for substrate. Asp92 functions as the Proton acceptor in the catalytic mechanism. 3 BNR repeats span residues 102–113 (RRSTDGGRTWGE), 175–186 (ATSTDGGLTWSH), and 239–250 (VYSDDHGRTWRA). Glu260 (nucleophile) is an active-site residue. Arg276 contacts substrate. BNR repeat units lie at residues 287-298 (AVSTDGGHSYGP) and 348-359 (RMSCDDGQTWPV). The active-site Nucleophile is the Tyr370. One can recognise an F5/8 type C domain in the interval 496-646 (TFTVTVGLLD…AVAELEVEGQ (151 aa)).

Belongs to the glycosyl hydrolase 33 family.

It localises to the secreted. The enzyme catalyses Hydrolysis of alpha-(2-&gt;3)-, alpha-(2-&gt;6)-, alpha-(2-&gt;8)- glycosidic linkages of terminal sialic acid residues in oligosaccharides, glycoproteins, glycolipids, colominic acid and synthetic substrates.. To release sialic acids for use as carbon and energy sources for this non-pathogenic bacterium while in pathogenic microorganisms, sialidases have been suggested to be pathogenic factors. The chain is Sialidase (nedA) from Micromonospora viridifaciens.